The sequence spans 802 residues: MANTKKTTLDITGMTCAACSNRIEKKLNKLDDVNAQVNLTTEKATVEYNPDQHDVQEFINTIQHLGYGVAVETVELDITGMTCAACSSRIEKVLNKMDGVQNATVNLTTEQAKVDYYPEETDADKLVTRIQKLGYDASIKDNNKDQTSRKAEALQHKLIKLIISAVLSLPLLMLMFVHLFNMHIPALFTNPWFQFILATPVQFIIGWQFYVGAYKNLRNGGANMDVLVAVGTSAAYFYSIYEMVRWLNGSTTQPHLYFETSAVLITLILFGKYLEARAKSQTTNALGELLSLQAKEARILKDGNEVMIPLNEVHVGDTLIVKPGEKIPVDGKIIKGMTAIDESMLTGESIPVEKNVDDTVIGSTMNKNGTITMTATKVGGDTALANIIKVVEEAQSSKAPIQRLADIISGYFVPIVVGIALLTFIVWITLVTPGTFEPALVASISVLVIACPCALGLATPTSIMVGTGRAAENGILFKGGEFVERTHQIDTIVLDKTGTITNGRPVVTDYHGDNQTLQLLATAEKDSEHPLAEAIVNYAKEKQLTLTETTTFKAVPGHGIEATIDHHHILVGNRKLMADNDISLPKHISDDLTYYERDGKTAMLIAVNYSLTGIIAVADTVKDHAKDAIKQLHDMGIEVAMLTGDNKNTAQAIAKQVGIDTVIADILPEEKAAQIAKLQQQGKKVAMVGDGVNDAPALVKADIGIAIGTGTEVAIEAADITILGGDLMLIPKAIYASKATIRNIRQNLFWAFGYNIAGIPIAALGLLAPWVAGAAMALSSVSVVTNALRLKKMRLEPRRKDA.

2 consecutive HMA domains span residues 5 to 70 (KKTT…YGVA) and 72 to 138 (ETVE…YDAS). Cu(+)-binding residues include C16, C19, C83, and C86. Helical transmembrane passes span 161 to 181 (LIIS…HLFN), 192 to 212 (WFQF…FYVG), 224 to 244 (MDVL…YEMV), 256 to 276 (LYFE…YLEA), 411 to 431 (YFVP…ITLV), and 438 to 458 (PALV…LGLA). Catalysis depends on D495, which acts as the 4-aspartylphosphate intermediate. 2 residues coordinate Mg(2+): D690 and D694. The next 2 helical transmembrane spans lie at 748–767 (LFWA…LGLL) and 771–790 (VAGA…ALRL).

This sequence belongs to the cation transport ATPase (P-type) (TC 3.A.3) family. Type IB subfamily.

It is found in the cell membrane. The catalysed reaction is Cu(+)(in) + ATP + H2O = Cu(+)(out) + ADP + phosphate + H(+). Its function is as follows. Involved in copper export. The protein is Copper-exporting P-type ATPase (copA) of Staphylococcus aureus (strain MW2).